Here is a 550-residue protein sequence, read N- to C-terminus: Parathyroid hormone 2 receptor (550 aa).

The first 24 residues, 1–24 (MAGLGASLHVWGWLMLGSCLLARA), serve as a signal peptide directing secretion. The Extracellular segment spans residues 27-145 (DSDGTITIEE…GKQEFFERLY (119 aa)). N-linked (GlcNAc...) asparagine glycosylation is found at Asn-51, Asn-106, Asn-116, and Asn-121. Residues 146–169 (VMYTVGYSISFGSLAVAILIIGYF) form a helical membrane-spanning segment. At 170-176 (RRLHCTR) the chain is on the cytoplasmic side. The helical transmembrane segment at 177–196 (NYIHMHLFVSFMLRATSIFV) threads the bilayer. Residues 197–237 (KDRVVHAHIGVKELESLIMQDDPQNSIEATSVDKSQYIGCK) lie on the Extracellular side of the membrane. Residues 238–260 (IAVVMFIYFLATNYYWILVEGLY) form a helical membrane-spanning segment. The Cytoplasmic segment spans residues 261-275 (LHNLIFVAFFSDTKY). A helical transmembrane segment spans residues 276–297 (LWGFILIGWGFPAAFVAAWAVA). The Extracellular segment spans residues 298-316 (RATLADARCWELSAGDIKW). The chain crosses the membrane as a helical span at residues 317-337 (IYQAPILAAIGLNFILFLNTV). Over 338–364 (RVLATKIWETNAVGHDTRKQYRKLAKS) the chain is Cytoplasmic. The helical transmembrane segment at 365 to 383 (TLVLVLVFGVHYIVFVCLP) threads the bilayer. Topologically, residues 384–394 (HSFTGLGWEIR) are extracellular. Residues 395 to 417 (MHCELFFNSFQGFFVSIIYCYCN) form a helical membrane-spanning segment. The Cytoplasmic portion of the chain corresponds to 418–550 (GEVQAEVKKM…GCQGETEDVL (133 aa)). A compositionally biased stretch (basic and acidic residues) spans 511–531 (EETKEDSGRQGDDILMEKPSR). Residues 511 to 550 (EETKEDSGRQGDDILMEKPSRPMESNPDTEGCQGETEDVL) form a disordered region.

This sequence belongs to the G-protein coupled receptor 2 family. In terms of assembly, binds to TIPF39/TIP39. In terms of tissue distribution, expressed abundantly in brain and pancreas. Also expressed in the testis.

It is found in the cell membrane. This is a specific receptor for parathyroid hormone. The activity of this receptor is mediated by G proteins which activate adenylyl cyclase. PTH2R may be responsible for PTH effects in a number of physiological systems. It may play a significant role in pancreatic function. PTH2R presence in neurons indicates that it may function as a neurotransmitter receptor. This chain is Parathyroid hormone 2 receptor (PTH2R), found in Homo sapiens (Human).